The sequence spans 364 residues: Aminomethyltransferase (364 aa).

It belongs to the GcvT family. As to quaternary structure, the glycine cleavage system is composed of four proteins: P, T, L and H.

The catalysed reaction is N(6)-[(R)-S(8)-aminomethyldihydrolipoyl]-L-lysyl-[protein] + (6S)-5,6,7,8-tetrahydrofolate = N(6)-[(R)-dihydrolipoyl]-L-lysyl-[protein] + (6R)-5,10-methylene-5,6,7,8-tetrahydrofolate + NH4(+). Its function is as follows. The glycine cleavage system catalyzes the degradation of glycine. The sequence is that of Aminomethyltransferase from Anoxybacillus flavithermus (strain DSM 21510 / WK1).